The following is a 173-amino-acid chain: ADP-ribosylation factor-like protein 11 (173 aa).

Gly-2 carries N-myristoyl glycine lipidation. GTP contacts are provided by residues 17–24, 61–65, and 120–123; these read GLDCAGKT, DIGGQ, and NKQE.

It belongs to the small GTPase superfamily. Arf family.

Its function is as follows. May play a role in apoptosis. May act as a tumor suppressor. The sequence is that of ADP-ribosylation factor-like protein 11 (Arl11) from Rattus norvegicus (Rat).